A 129-amino-acid polypeptide reads, in one-letter code: Glycine cleavage system H protein (129 aa).

The region spanning 24–106 (LVRVGISAFA…HGEGWLLVLR (83 aa)) is the Lipoyl-binding domain. Position 65 is an N6-lipoyllysine (Lys65).

Belongs to the GcvH family. The glycine cleavage system is composed of four proteins: P, T, L and H. Requires (R)-lipoate as cofactor.

The glycine cleavage system catalyzes the degradation of glycine. The H protein shuttles the methylamine group of glycine from the P protein to the T protein. This chain is Glycine cleavage system H protein, found in Parasynechococcus marenigrum (strain WH8102).